A 97-amino-acid chain; its full sequence is uncharacterized protein (97 aa).

3 consecutive transmembrane segments (helical) span residues 5 to 25 (INYLLIVIALLFFVVAYFVGI), 49 to 71 (IAGYFFLNSGLFILLNSFISFQG), and 75 to 92 (LIPPLILAYGAGVIIYVN).

The protein resides in the cell membrane. This is an uncharacterized protein from Bacillus subtilis (strain 168).